We begin with the raw amino-acid sequence, 185 residues long: Sulfopyruvate decarboxylase subunit beta (185 aa).

Belongs to the TPP enzyme family. Heterododecamer composed of 6 subunits alpha and 6 subunits beta. Thiamine diphosphate is required as a cofactor.

The catalysed reaction is 3-sulfopyruvate + H(+) = sulfoacetaldehyde + CO2. Its pathway is cofactor biosynthesis; coenzyme M biosynthesis; sulfoacetaldehyde from phosphoenolpyruvate and sulfite: step 4/4. Involved in the biosynthesis of the coenzyme M (2-mercaptoethanesulfonic acid). Catalyzes the decarboxylation of sulfopyruvate to sulfoacetaldehyde. This Methanothermobacter thermautotrophicus (strain ATCC 29096 / DSM 1053 / JCM 10044 / NBRC 100330 / Delta H) (Methanobacterium thermoautotrophicum) protein is Sulfopyruvate decarboxylase subunit beta.